A 272-amino-acid chain; its full sequence is MSRMRLIVAGAGGRMGRALVRAIADSDGAELAGALEAPGSELIGKDSGLLAGLPANNIKLSADLWAMSAEADGILDFTVPAATIANVAIAAERGIVHVVGTTGLSASDDAVIKSVTKRAIVVQSGNMSLGVNLLSALVKQVAKSLDANFDIEILEMHHKHKVDAPSGTALMLGRAAAEGRGITLDGHSARGRDGITGARRSGDIGFASLRGGTAAGDHSVIFAGPSERLVLSHQAEDRMIFAHGALKAALWAHGKPPGYYTMDDVLGLKDLF.

NAD(+) contacts are provided by residues 10 to 15 (GAGGRM), glutamate 36, 100 to 102 (GTT), and 124 to 127 (SGNM). Histidine 157 functions as the Proton donor/acceptor in the catalytic mechanism. Histidine 158 provides a ligand contact to (S)-2,3,4,5-tetrahydrodipicolinate. The active-site Proton donor is the lysine 161. 167 to 168 (GT) serves as a coordination point for (S)-2,3,4,5-tetrahydrodipicolinate.

This sequence belongs to the DapB family.

It is found in the cytoplasm. It catalyses the reaction (S)-2,3,4,5-tetrahydrodipicolinate + NAD(+) + H2O = (2S,4S)-4-hydroxy-2,3,4,5-tetrahydrodipicolinate + NADH + H(+). The catalysed reaction is (S)-2,3,4,5-tetrahydrodipicolinate + NADP(+) + H2O = (2S,4S)-4-hydroxy-2,3,4,5-tetrahydrodipicolinate + NADPH + H(+). Its pathway is amino-acid biosynthesis; L-lysine biosynthesis via DAP pathway; (S)-tetrahydrodipicolinate from L-aspartate: step 4/4. Its function is as follows. Catalyzes the conversion of 4-hydroxy-tetrahydrodipicolinate (HTPA) to tetrahydrodipicolinate. The polypeptide is 4-hydroxy-tetrahydrodipicolinate reductase (Bradyrhizobium sp. (strain ORS 278)).